A 176-amino-acid chain; its full sequence is tRNA (cytidine(56)-2'-O)-methyltransferase (176 aa).

S-adenosyl-L-methionine is bound by residues Leu-86 and 111 to 115 (GAEKV).

It belongs to the aTrm56 family. As to quaternary structure, homodimer.

The protein resides in the cytoplasm. The catalysed reaction is cytidine(56) in tRNA + S-adenosyl-L-methionine = 2'-O-methylcytidine(56) in tRNA + S-adenosyl-L-homocysteine + H(+). In terms of biological role, specifically catalyzes the AdoMet-dependent 2'-O-ribose methylation of cytidine at position 56 in tRNAs. This is tRNA (cytidine(56)-2'-O)-methyltransferase from Methanoregula boonei (strain DSM 21154 / JCM 14090 / 6A8).